Reading from the N-terminus, the 260-residue chain is Thrombin-like enzyme 1 (260 aa).

The first 18 residues, 1–18 (MVLITVLANLLILQLSYA), serve as a signal peptide directing secretion. Positions 19 to 24 (QKSSEL) are excised as a propeptide. The Peptidase S1 domain occupies 25–251 (VIGGDECNIN…HLDWIQSIIA (227 aa)). 6 disulfide bridges follow: Cys31-Cys165, Cys52-Cys68, Cys102-Cys258, Cys144-Cys212, Cys176-Cys191, and Cys202-Cys227. His67 serves as the catalytic Charge relay system. Asn105 carries an N-linked (GlcNAc...) asparagine glycan. Residue Asp112 is the Charge relay system of the active site. N-linked (GlcNAc...) asparagine glycosylation is found at Asn156 and Asn172. The Charge relay system role is filled by Ser206. An N-linked (GlcNAc...) asparagine glycan is attached at Asn253.

This sequence belongs to the peptidase S1 family. Snake venom subfamily. In terms of assembly, monomer. In terms of tissue distribution, expressed by the venom gland.

It localises to the secreted. Thrombin-like snake venom serine protease. The polypeptide is Thrombin-like enzyme 1 (Trimeresurus albolabris (White-lipped pit viper)).